Here is a 565-residue protein sequence, read N- to C-terminus: MEDSDSAAKQLGLAEAAAVAAAAAVAAAAAAAAGGEAEEPVLSRDEDSEEDADSEAERETPRVTAVAVMAAEPGHMDMGAEALPGPDEAAAAAAFAEVTTVTVANVGAAADNVFTTSVANAASISGHVLSGRTALQIGDSLNTEKATLIVVHTDGSIVETTGLKGPAAPLTPGPQSPPTPLAPGQEKGGTKYNWDPSVYDSELPVRCRNISGTLYKNRLGSGGRGRCIKQGENWYSPTEFEAMAGRASSKDWKRSIRYAGRPLQCLIQDGILNPHAASCTCAACCDDMTLSGPVRLFVPYKRRKKENELPTTPVKKDSPKNITLLPATAATTFTVTPSGQITTSGALTFDRASTVEATAVISESPAQGDVFAGATVQEASVQPPCRASHPEPHYPGYQDSCQIAPFPEAALPTSHPKIVLTSLPALAVPPPTPTKAAPPALVNGLELSEPRSWLYLEEMVNSLLNTAQQLKTLFEQAKHASTYREAATNQAKIHADAERKEQSCVNCGREAMSECTGCHKVNYCSTFCQRKDWKDHQHICGQSAAVTVQADEVHVAESVMEKVTV.

Disordered stretches follow at residues 34 to 62 (GGEA…ETPR) and 162 to 190 (GLKG…KGGT). The span at 169-181 (PLTPGPQSPPTPL) shows a compositional bias: pro residues. Position 171 is a phosphothreonine (Thr-171). The residue at position 176 (Ser-176) is a Phosphoserine. Thr-179 carries the post-translational modification Phosphothreonine. In terms of domain architecture, SAND spans 193-273 (NWDPSVYDSE…QCLIQDGILN (81 aa)). The Nuclear localization signal motif lies at 301–316 (KRRKKENELPTTPVKK). Residues 403-478 (IAPFPEAALP…QLKTLFEQAK (76 aa)) form an interaction with LMO4 region. Thr-432 carries the post-translational modification Phosphothreonine. Ser-448 bears the Phosphoserine mark. Cys-504, Cys-507, Cys-515, Cys-518, Cys-524, Cys-528, His-536, and Cys-540 together coordinate Zn(2+). Residues 504–540 (CVNCGREAMSECTGCHKVNYCSTFCQRKDWKDHQHIC) form an MYND-type zinc finger.

As to quaternary structure, homodimer. Isoform 1 and isoform 4 may form a heterodimer. Interacts with LMO2 and CLIM2. Interacts with LMO4; LMO4 blocks export from nucleus. May interact with the corepressors NCOR1 and NCRO2. Identified in a complex with the XRCC5 and XRCC6 heterodimer. Interacts (via the SAND domain) with the DNA-PK complex subunit XRCC6; the interaction is direct and may be inhibited by DNA-binding. Post-translationally, may be phosphorylated by DNA-PK complex in a DNA independent manner (in vitro). As to expression, expressed in various tissues and cells such as in peripheral mononuclear cells and hormone-secreting pituitary cells. Expression in pancreatic lymph nodes of patients with type 1 diabetes is 20 times higher than in healthy controls. Highly expressed in fetal and adult brain.

The protein localises to the nucleus. The protein resides in the cytoplasm. Its subcellular location is the secreted. Transcription factor that binds to sequence with multiple copies of 5'-TTC[CG]G-3' present in its own promoter and that of the HNRPA2B1 gene. Down-regulates transcription of these genes. Binds to the retinoic acid response element (RARE) 5'-AGGGTTCACCGAAAGTTCA-3'. Activates the proenkephalin gene independently of promoter binding, probably through protein-protein interaction. When secreted, behaves as an inhibitor of cell proliferation, by arresting cells in the G0 or G1 phase. Required for neural tube closure and skeletal patterning. Regulates epithelial cell proliferation and side-branching in the mammary gland. Controls the expression of peripheral tissue antigens in pancreatic lymph nodes. Isoform 1 displays greater transcriptional activity than isoform 4. Isoform 4 may inhibit transcriptional activity of isoform 1 by interacting with isoform 1 and retaining it in the cytoplasm. Transcriptional activator of EIF4G3. The protein is Deformed epidermal autoregulatory factor 1 homolog (DEAF1) of Homo sapiens (Human).